Reading from the N-terminus, the 475-residue chain is Sensor histidine kinase QseE (475 aa).

The Cytoplasmic portion of the chain corresponds to 1-13 (MKRWPVFPRSLRQ). A helical transmembrane segment spans residues 14–34 (LVMLAFLLILLPLLVLAWQAW). The Periplasmic portion of the chain corresponds to 35–173 (QSLNALSDQA…LQREIAERGQ (139 aa)). The helical transmembrane segment at 174–194 (YFGWQSLVLFLVSLVMVLLFT) threads the bilayer. Over 195 to 475 (RMIIGPVKNI…IELPSSKNTK (281 aa)) the chain is Cytoplasmic. Residues 256-472 (HLSHELKTPL…CFRIELPSSK (217 aa)) form the Histidine kinase domain. His259 carries the post-translational modification Phosphohistidine; by autocatalysis.

In terms of processing, autophosphorylated.

Its subcellular location is the cell inner membrane. It carries out the reaction ATP + protein L-histidine = ADP + protein N-phospho-L-histidine.. Member of the two-component regulatory system QseF/QseE involved in the regulation of virulence and metabolism in EHEC. Required for pedestal formation in host epithelial cells during infection. Autophosphorylates in response to epinephrine, sulfate or phosphate and then probably transfers its phosphate group to QseF. This chain is Sensor histidine kinase QseE (qseE), found in Escherichia coli O157:H7.